An 872-amino-acid polypeptide reads, in one-letter code: Alanine--tRNA ligase (872 aa).

The Zn(2+) site is built by His-571, His-575, Cys-674, and His-678.

This sequence belongs to the class-II aminoacyl-tRNA synthetase family. Zn(2+) is required as a cofactor.

It is found in the cytoplasm. The catalysed reaction is tRNA(Ala) + L-alanine + ATP = L-alanyl-tRNA(Ala) + AMP + diphosphate. Catalyzes the attachment of alanine to tRNA(Ala) in a two-step reaction: alanine is first activated by ATP to form Ala-AMP and then transferred to the acceptor end of tRNA(Ala). Also edits incorrectly charged Ser-tRNA(Ala) and Gly-tRNA(Ala) via its editing domain. The chain is Alanine--tRNA ligase from Symbiobacterium thermophilum (strain DSM 24528 / JCM 14929 / IAM 14863 / T).